We begin with the raw amino-acid sequence, 382 residues long: D-galactonate dehydratase (382 aa).

Asp-183 is a Mg(2+) binding site. His-185 (proton donor) is an active-site residue. 2 residues coordinate Mg(2+): Glu-209 and Glu-235. Catalysis depends on His-285, which acts as the Proton acceptor.

Belongs to the mandelate racemase/muconate lactonizing enzyme family. GalD subfamily. The cofactor is Mg(2+).

It carries out the reaction D-galactonate = 2-dehydro-3-deoxy-D-galactonate + H2O. The protein operates within carbohydrate acid metabolism; D-galactonate degradation; D-glyceraldehyde 3-phosphate and pyruvate from D-galactonate: step 1/3. Functionally, catalyzes the dehydration of D-galactonate to 2-keto-3-deoxy-D-galactonate. The chain is D-galactonate dehydratase from Ralstonia pickettii (strain 12J).